The chain runs to 29 residues: Cyclotide cter-K (29 aa).

Positions 1–29 (HEPCGESCVFIPCITTVVGCSCKNKVCYN) form a cross-link, cyclopeptide (His-Asn). 3 cysteine pairs are disulfide-bonded: cysteine 4–cysteine 20, cysteine 8–cysteine 22, and cysteine 13–cysteine 27.

Post-translationally, contains 3 disulfide bonds. In terms of processing, this is a cyclic peptide.

Functionally, probably participates in a plant defense mechanism. This chain is Cyclotide cter-K, found in Clitoria ternatea (Butterfly pea).